The primary structure comprises 84 residues: Sulfur carrier protein TusA (84 aa).

C19 (cysteine persulfide intermediate) is an active-site residue.

Belongs to the sulfur carrier protein TusA family. As to quaternary structure, interacts with IscS.

The protein localises to the cytoplasm. Its pathway is tRNA modification. Functionally, sulfur carrier protein involved in sulfur trafficking in the cell. Part of a sulfur-relay system required for 2-thiolation during synthesis of 2-thiouridine of the modified wobble base 5-methylaminomethyl-2-thiouridine (mnm(5)s(2)U) in tRNA. Interacts with IscS and stimulates its cysteine desulfurase activity. Accepts an activated sulfur from IscS, which is then transferred to TusD, and thus determines the direction of sulfur flow from IscS to 2-thiouridine formation. Also appears to be involved in sulfur transfer for the biosynthesis of molybdopterin. This chain is Sulfur carrier protein TusA, found in Proteus mirabilis (strain HI4320).